The chain runs to 383 residues: Serine protease 23 (383 aa).

An N-terminal signal peptide occupies residues 1–19 (MAGIPGLLFLLFFLLCAVG). N93 carries an N-linked (GlcNAc...) asparagine glycan. Residue S109 is modified to Phosphoserine; by FAM20C. C160 and C176 are disulfide-bonded. H175 (charge relay system) is an active-site residue. N-linked (GlcNAc...) asparagine glycosylation is present at N207. Active-site charge relay system residues include D240 and S316.

Belongs to the peptidase S1 family.

Its subcellular location is the secreted. The sequence is that of Serine protease 23 (PRSS23) from Homo sapiens (Human).